Consider the following 261-residue polypeptide: Leucine-rich repeat-containing protein 18 (261 aa).

LRR repeat units lie at residues 28–49 (GKKR…ILRL), 51–72 (DMDE…ISKF), 74–95 (NLRW…IGQM), 97–118 (SLLY…VELK), 122–144 (NIRA…GALK), 145–167 (ELHE…SKLP), and 168–189 (KLKK…EIFI).

It localises to the cytoplasm. Its function is as follows. May be involved in the regulation of spermatogenesis and sperm maturation. The chain is Leucine-rich repeat-containing protein 18 (LRRC18) from Homo sapiens (Human).